The sequence spans 338 residues: Replication factor C small subunit (338 aa).

53–60 is an ATP binding site; the sequence is GPPGVGKT.

It belongs to the activator 1 small subunits family. RfcS subfamily. As to quaternary structure, heteromultimer composed of small subunits (RfcS) and large subunits (RfcL).

Functionally, part of the RFC clamp loader complex which loads the PCNA sliding clamp onto DNA. This chain is Replication factor C small subunit, found in Methanosarcina mazei (strain ATCC BAA-159 / DSM 3647 / Goe1 / Go1 / JCM 11833 / OCM 88) (Methanosarcina frisia).